A 549-amino-acid chain; its full sequence is Cation/acetate symporter ActP (549 aa).

Transmembrane regions (helical) follow at residues 33–53 (WQAI…TYWA), 77–97 (LAIA…ALVF), 103–123 (GLIY…LIAE), 148–168 (ILSA…QMVG), 183–203 (IAVV…GMLA), 206–226 (WVQI…AFMV), 262–282 (ISAL…PHIL), 303–323 (GFMG…IMLV), 355–375 (LFLG…VAGL), 404–424 (VSKI…VLFE), 428–448 (IAFM…PIIL), 464–484 (GGWL…TIWV), and 493–513 (IFPY…GIWL).

The protein belongs to the sodium:solute symporter (SSF) (TC 2.A.21) family.

The protein resides in the cell inner membrane. Functionally, transports acetate. The chain is Cation/acetate symporter ActP from Escherichia coli O1:K1 / APEC.